The sequence spans 210 residues: Thymidylate kinase (210 aa).

11-18 (GGEGAGKT) serves as a coordination point for ATP.

This sequence belongs to the thymidylate kinase family.

The catalysed reaction is dTMP + ATP = dTDP + ADP. Functionally, phosphorylation of dTMP to form dTDP in both de novo and salvage pathways of dTTP synthesis. The protein is Thymidylate kinase (tmk) of Halalkalibacterium halodurans (strain ATCC BAA-125 / DSM 18197 / FERM 7344 / JCM 9153 / C-125) (Bacillus halodurans).